A 204-amino-acid polypeptide reads, in one-letter code: Tat proofreading chaperone DmsD (204 aa).

Belongs to the TorD/DmsD family. DmsD subfamily.

In terms of biological role, required for biogenesis/assembly of DMSO reductase, but not for the interaction of the DmsA signal peptide with the Tat system. May be part of a chaperone cascade complex that facilitates a folding-maturation pathway for the substrate protein. The protein is Tat proofreading chaperone DmsD of Escherichia coli O157:H7.